Here is a 173-residue protein sequence, read N- to C-terminus: ATP synthase subunit b (173 aa).

The helical transmembrane segment at 12-32 (LDVNPGLVVWTLVTFLVVVLV) threads the bilayer.

This sequence belongs to the ATPase B chain family. In terms of assembly, F-type ATPases have 2 components, F(1) - the catalytic core - and F(0) - the membrane proton channel. F(1) has five subunits: alpha(3), beta(3), gamma(1), delta(1), epsilon(1). F(0) has three main subunits: a(1), b(2) and c(10-14). The alpha and beta chains form an alternating ring which encloses part of the gamma chain. F(1) is attached to F(0) by a central stalk formed by the gamma and epsilon chains, while a peripheral stalk is formed by the delta and b chains.

The protein localises to the cell inner membrane. Functionally, f(1)F(0) ATP synthase produces ATP from ADP in the presence of a proton or sodium gradient. F-type ATPases consist of two structural domains, F(1) containing the extramembraneous catalytic core and F(0) containing the membrane proton channel, linked together by a central stalk and a peripheral stalk. During catalysis, ATP synthesis in the catalytic domain of F(1) is coupled via a rotary mechanism of the central stalk subunits to proton translocation. Its function is as follows. Component of the F(0) channel, it forms part of the peripheral stalk, linking F(1) to F(0). This Leptospira interrogans serogroup Icterohaemorrhagiae serovar copenhageni (strain Fiocruz L1-130) protein is ATP synthase subunit b.